Here is a 700-residue protein sequence, read N- to C-terminus: Glycine--tRNA ligase beta subunit (700 aa).

This sequence belongs to the class-II aminoacyl-tRNA synthetase family. Tetramer of two alpha and two beta subunits.

It is found in the cytoplasm. The enzyme catalyses tRNA(Gly) + glycine + ATP = glycyl-tRNA(Gly) + AMP + diphosphate. This Helicobacter pylori (strain Shi470) protein is Glycine--tRNA ligase beta subunit.